The following is a 275-amino-acid chain: Phosphatidylglycerol--prolipoprotein diacylglyceryl transferase (275 aa).

A run of 3 helical transmembrane segments spans residues 18 to 38, 55 to 75, and 89 to 109; these read IEVH…YFIA, IIFW…VIFQ, and IWHG…TGVI. Arginine 137 lines the a 1,2-diacyl-sn-glycero-3-phospho-(1'-sn-glycerol) pocket. 2 helical membrane-spanning segments follow: residues 203–223 and 235–255; these read IGET…FVEG and IRVA…MIIY.

It belongs to the Lgt family.

It is found in the cell membrane. The catalysed reaction is L-cysteinyl-[prolipoprotein] + a 1,2-diacyl-sn-glycero-3-phospho-(1'-sn-glycerol) = an S-1,2-diacyl-sn-glyceryl-L-cysteinyl-[prolipoprotein] + sn-glycerol 1-phosphate + H(+). It functions in the pathway protein modification; lipoprotein biosynthesis (diacylglyceryl transfer). Its function is as follows. Catalyzes the transfer of the diacylglyceryl group from phosphatidylglycerol to the sulfhydryl group of the N-terminal cysteine of a prolipoprotein, the first step in the formation of mature lipoproteins. This Staphylococcus carnosus (strain TM300) protein is Phosphatidylglycerol--prolipoprotein diacylglyceryl transferase.